The primary structure comprises 940 residues: Vacuolar protein sorting-associated protein 54 (940 aa).

Thr-30 is subject to Phosphothreonine. A disordered region spans residues 192-218 (QQLERDKPLENGAQGAPGPGTGGQTPT). Residues 299–325 (HAILAEMEQAADQVRQLRAALAELHSH) are a coiled coil.

The protein belongs to the VPS54 family.

It localises to the golgi apparatus. The protein localises to the trans-Golgi network. Its function is as follows. May be involved in retrograde transport from early and late endosomes to late Golgi. Required during spermatogenesis for sperm individualization. This chain is Vacuolar protein sorting-associated protein 54 (scat), found in Drosophila melanogaster (Fruit fly).